The primary structure comprises 403 residues: Tyrosine--tRNA ligase (403 aa).

The 'HIGH' region signature appears at Pro46–His55. Residues Lys230 to Ser234 carry the 'KMSKS' region motif. ATP is bound at residue Lys233. One can recognise an S4 RNA-binding domain in the interval Leu342–Val402.

Belongs to the class-I aminoacyl-tRNA synthetase family. TyrS type 2 subfamily. As to quaternary structure, homodimer.

It localises to the cytoplasm. The enzyme catalyses tRNA(Tyr) + L-tyrosine + ATP = L-tyrosyl-tRNA(Tyr) + AMP + diphosphate + H(+). In terms of biological role, catalyzes the attachment of tyrosine to tRNA(Tyr) in a two-step reaction: tyrosine is first activated by ATP to form Tyr-AMP and then transferred to the acceptor end of tRNA(Tyr). This is Tyrosine--tRNA ligase from Psychrobacter arcticus (strain DSM 17307 / VKM B-2377 / 273-4).